The sequence spans 251 residues: MTTIGTRKRVAVVTGASSGIGEATARTLAAQGFHVVAVARRADRITALANQIGGTAIVADVTDDAAVEALARALSRVDVLVNNAGGAKGLQFVADADLEHWRWMWDTNVLGTLRVTRALLPKLIDSGDGLIVTVTSIAAIEVYDGGAGYTAAKHAQGALHRTLRGELLGKPVRLTEIAPGAVETEFSLVRFDGDQQRADAVYAGMTPLVAADVAEVIGFVATRPSHVNLDQIVIRPRDQASASRRATHPVR.

An NADP(+)-binding site is contributed by 12–36 (VVTGASSGIGEATARTLAAQGFHVV). Serine 136 is a binding site for substrate. Residue tyrosine 149 is the Proton acceptor of the active site.

The protein belongs to the short-chain dehydrogenases/reductases (SDR) family.

This is an uncharacterized protein from Mycobacterium tuberculosis (strain CDC 1551 / Oshkosh).